The following is a 223-amino-acid chain: Putative nudix hydrolase 2 (223 aa).

The Nudix hydrolase domain maps to 72-213 (ASADGVSIIA…SIVVESTLLA (142 aa)). Positions 111-132 (GLIDAGETAQQAAIRELKEETG) match the Nudix box motif. Glu126 and Glu130 together coordinate Mg(2+).

It belongs to the Nudix hydrolase family. Mg(2+) serves as cofactor. Requires Mn(2+) as cofactor.

In terms of biological role, probably mediates the hydrolysis of some nucleoside diphosphate derivatives. This is Putative nudix hydrolase 2 (ndx-2) from Caenorhabditis elegans.